Reading from the N-terminus, the 510-residue chain is Probable cytochrome P450 4aa1 (510 aa).

C450 provides a ligand contact to heme.

It belongs to the cytochrome P450 family. Requires heme as cofactor.

Its subcellular location is the endoplasmic reticulum membrane. The protein resides in the microsome membrane. In terms of biological role, may be involved in the metabolism of insect hormones and in the breakdown of synthetic insecticides. The sequence is that of Probable cytochrome P450 4aa1 (Cyp4aa1) from Drosophila melanogaster (Fruit fly).